We begin with the raw amino-acid sequence, 1453 residues long: NRPS-like tryptophan epimerase fscC (1453 aa).

An adenylation region spans residues 37–433 (SYGELSAMSS…ATHLIRNCVV (397 aa)). In terms of domain architecture, Carrier spans 544-626 (TGSRQSTRHK…LFHTSKSRFT (83 aa)). An O-(pantetheine 4'-phosphoryl)serine modification is found at Ser-586. Residues 639–1053 (FPLSPVQRFF…KDVLESAGVF (415 aa)) form an epimerization (E) domain region. The condensation stretch occupies residues 1181–1391 (FFGLQSNERA…AGSSLHQHNQ (211 aa)).

This sequence belongs to the NRP synthetase family. It depends on pantetheine 4'-phosphate as a cofactor.

Its pathway is secondary metabolite biosynthesis. NRPS-like tryptophan epimerase; part of the fragmented gene cluster that mediates the biosynthesis of fusarochromene, a tryptophan-derived metabolite closely related to a group of mycotoxins including fusarochromanone. Within the pathway, fscC catalyzes the first step via epimerization of L-tryptophan to provide the intermediate D-tryptophan. D-tryptophan is subsequently hydroxylated by the tryptophan 6-hydroxylase fscE to yield 6-hydroxytryptophan. The pyrrole ring undergoes cleavaged by the tryptophan 2,3-dioxygenase fscD and is finally converted to 4-hydroxykyrunenine by the hydrolase fscH. The NRPS-like oxidoreductase fscA reduces the carboxyl group to primary alcohol and the DMATS-type prenyltransferase fscG performs prenylation, followed by the formation of a chromene ring catalyzed by the oxidoreductase fscI, which leads to desacetylfusarochromene. Epoxidation by fscF and rearrangement reactions of chromene double bonds convert compound desacetylfusarochromene to fusarochromanones. Although specific acetyltransferases were not found near the fsc gene cluster, several predicted enzymes containing the N-acetyltransferase superfamily domain are present in the genome of F.equiseti. These predicted enzymes may have the potential to convert desacetylfusarochromene to fusarochromene. The protein is NRPS-like tryptophan epimerase fscC of Fusarium equiseti (Fusarium scirpi).